A 246-amino-acid polypeptide reads, in one-letter code: MLNDKTAIVTGASRGIGRSIALDLAKSGANVVVNYSGNEAKANEVVDEIKSMGRKAIAVKADVSNPEDVQNMIKETLSVFSTIDILVNNAGITRDNLIMRMKEDEWDDVININLKGVFNCTKAVTRQMMKQRSGRIINVSSIVGVSGNPGQANYVAAKAGVIGLTKSSAKELASRNITVNAIAPGFISTDMTDKLAKDVQDEMLKQIPLARFGEPSDVSSVVTFLASEGARYMTGQTLHIDGGMVM.

Residues 11–14 (GASR), serine 36, 62–63 (DV), and asparagine 89 each bind NADP(+). Residue serine 141 coordinates substrate. The active-site Proton acceptor is tyrosine 154. NADP(+) is bound by residues 154–158 (YVAAK) and isoleucine 187.

This sequence belongs to the short-chain dehydrogenases/reductases (SDR) family. As to quaternary structure, homotetramer.

The catalysed reaction is a (3R)-hydroxyacyl-[ACP] + NADP(+) = a 3-oxoacyl-[ACP] + NADPH + H(+). The protein operates within lipid metabolism; fatty acid biosynthesis. Catalyzes the NADPH-dependent reduction of beta-ketoacyl-ACP substrates to beta-hydroxyacyl-ACP products, the first reductive step in the elongation cycle of fatty acid biosynthesis. The protein is 3-oxoacyl-[acyl-carrier-protein] reductase FabG (fabG) of Bacillus subtilis (strain 168).